The following is a 147-amino-acid chain: ATP synthase epsilon chain 2 (147 aa).

The protein belongs to the ATPase epsilon chain family. F-type ATPases have 2 components, CF(1) - the catalytic core - and CF(0) - the membrane proton channel. CF(1) has five subunits: alpha(3), beta(3), gamma(1), delta(1), epsilon(1). CF(0) has three main subunits: a, b and c.

The protein resides in the cell inner membrane. Its function is as follows. Produces ATP from ADP in the presence of a proton gradient across the membrane. This is ATP synthase epsilon chain 2 from Photobacterium profundum (strain SS9).